The sequence spans 499 residues: NAD(P)H-quinone oxidoreductase chain 4, chloroplastic (499 aa).

Helical transmembrane passes span 4–24, 31–51, 87–107, 113–130, 134–154, 167–187, 211–231, 242–262, 274–294, 305–325, 330–350, 386–406, 416–436, and 462–482; these read LPWL…IPLF, MIRW…TYIF, IGLI…AWPV, LLHF…GLFA, ILLF…LLSM, FLLY…SMGL, ILLY…FPLH, HYST…YGLI, SLFS…AALT, IAYS…SMTY, GAIL…FLVG, LALP…GVIT, IIIT…LLSM, and LFIL…PDLV.

This sequence belongs to the complex I subunit 4 family.

The protein resides in the plastid. It is found in the chloroplast thylakoid membrane. The enzyme catalyses a plastoquinone + NADH + (n+1) H(+)(in) = a plastoquinol + NAD(+) + n H(+)(out). It carries out the reaction a plastoquinone + NADPH + (n+1) H(+)(in) = a plastoquinol + NADP(+) + n H(+)(out). In Cryptomeria japonica (Japanese cedar), this protein is NAD(P)H-quinone oxidoreductase chain 4, chloroplastic.